The chain runs to 414 residues: Ribulose bisphosphate carboxylase large chain (414 aa).

Asn-101 and Thr-151 together coordinate substrate. The active-site Proton acceptor is Lys-153. Lys-155 is a binding site for substrate. Mg(2+) contacts are provided by Lys-179, Asp-181, and Glu-182. Position 179 is an N6-carboxylysine (Lys-179). The active-site Proton acceptor is His-272. Arg-273, His-305, and Ser-357 together coordinate substrate.

This sequence belongs to the RuBisCO large chain family. Type I subfamily. In terms of assembly, heterohexadecamer of 8 large chains and 8 small chains; disulfide-linked. The disulfide link is formed within the large subunit homodimers. The cofactor is Mg(2+). Post-translationally, the disulfide bond which can form in the large chain dimeric partners within the hexadecamer appears to be associated with oxidative stress and protein turnover.

The protein localises to the plastid. It is found in the chloroplast. It catalyses the reaction 2 (2R)-3-phosphoglycerate + 2 H(+) = D-ribulose 1,5-bisphosphate + CO2 + H2O. The catalysed reaction is D-ribulose 1,5-bisphosphate + O2 = 2-phosphoglycolate + (2R)-3-phosphoglycerate + 2 H(+). Its function is as follows. RuBisCO catalyzes two reactions: the carboxylation of D-ribulose 1,5-bisphosphate, the primary event in carbon dioxide fixation, as well as the oxidative fragmentation of the pentose substrate in the photorespiration process. Both reactions occur simultaneously and in competition at the same active site. This Onychium japonicum (Japanese claw fern) protein is Ribulose bisphosphate carboxylase large chain (rbcL).